The chain runs to 248 residues: Peptidyl-tRNA hydrolase (248 aa).

Y14 is a tRNA binding site. H19 acts as the Proton acceptor in catalysis. TRNA is bound by residues F64, N66, and N112. Residues 190–248 (PRSSTGEASKGRKKAQKSEPGVAKTPAKAATPEAPAAGDIPAAPEDSRSPMQKLLDKFK) form a disordered region. Residues 212–226 (AKTPAKAATPEAPAA) show a composition bias toward low complexity.

Belongs to the PTH family. As to quaternary structure, monomer.

Its subcellular location is the cytoplasm. The enzyme catalyses an N-acyl-L-alpha-aminoacyl-tRNA + H2O = an N-acyl-L-amino acid + a tRNA + H(+). In terms of biological role, hydrolyzes ribosome-free peptidyl-tRNAs (with 1 or more amino acids incorporated), which drop off the ribosome during protein synthesis, or as a result of ribosome stalling. Catalyzes the release of premature peptidyl moieties from peptidyl-tRNA molecules trapped in stalled 50S ribosomal subunits, and thus maintains levels of free tRNAs and 50S ribosomes. In Ruegeria sp. (strain TM1040) (Silicibacter sp.), this protein is Peptidyl-tRNA hydrolase.